The primary structure comprises 558 residues: Ankyrin repeat protein OPG189 (558 aa).

ANK repeat units follow at residues 65 to 95 (YGEN…NINK), 169 to 205 (YGCT…DVDK), 209 to 239 (YGNT…NIDS), 243 to 272 (NRYT…NVNA), 276 to 304 (FGTT…ELEI), 339 to 368 (YNET…DFET), and 372 to 401 (SGCT…SLKI).

This sequence belongs to the orthopoxvirus OPG189 protein family.

Its function is as follows. Contributes to viral release without involving rearrangement of host actin. The chain is Ankyrin repeat protein OPG189 (OPG189) from Homo sapiens (Human).